Consider the following 282-residue polypeptide: S-formylglutathione hydrolase (282 aa).

Lysine 4 carries the N6-succinyllysine modification. Serine 149 serves as the catalytic Charge relay system. Lysine 200 bears the N6-acetyllysine mark. Residues aspartate 226 and histidine 260 each act as charge relay system in the active site.

Belongs to the esterase D family. As to quaternary structure, homodimer.

Its subcellular location is the cytoplasm. It localises to the cytoplasmic vesicle. It carries out the reaction S-formylglutathione + H2O = formate + glutathione + H(+). Functionally, serine hydrolase involved in the detoxification of formaldehyde. The chain is S-formylglutathione hydrolase (Esd) from Rattus norvegicus (Rat).